A 605-amino-acid polypeptide reads, in one-letter code: Terpenoid synthase 18 (605 aa).

Mg(2+) contacts are provided by aspartate 356, aspartate 360, asparagine 500, threonine 504, and glutamate 508. The DDXXD motif motif lies at 356–360; the sequence is DDTYD.

This sequence belongs to the terpene synthase family. Tpsa subfamily. Mg(2+) serves as cofactor. It depends on Mn(2+) as a cofactor. As to expression, predominantly expressed in flowers and siliques but also in roots and leaves.

Its subcellular location is the cytoplasm. Its pathway is secondary metabolite biosynthesis; terpenoid biosynthesis. The sequence is that of Terpenoid synthase 18 (TPS18) from Arabidopsis thaliana (Mouse-ear cress).